A 212-amino-acid chain; its full sequence is Ribosomal RNA small subunit methyltransferase G (212 aa).

Residues glycine 80, leucine 85, 131-132, and arginine 146 contribute to the S-adenosyl-L-methionine site; that span reads AE.

The protein belongs to the methyltransferase superfamily. RNA methyltransferase RsmG family.

Its subcellular location is the cytoplasm. The catalysed reaction is guanosine(527) in 16S rRNA + S-adenosyl-L-methionine = N(7)-methylguanosine(527) in 16S rRNA + S-adenosyl-L-homocysteine. Specifically methylates the N7 position of guanine in position 527 of 16S rRNA. This Xanthomonas oryzae pv. oryzae (strain KACC10331 / KXO85) protein is Ribosomal RNA small subunit methyltransferase G.